The following is a 377-amino-acid chain: Caspase-4 (377 aa).

Residues 1–59 (MAEGNHRKKPLKVLESLGKDFLTGVLDNLVEQNVLNWKEEEKKKYYDAKTEDKVRVMAD) form a required for LPS-binding region. Residues 1-80 (MAEGNHRKKP…MLLQTFFNID (80 aa)) constitute a propeptide that is removed on maturation. The CARD domain occupies 1–91 (MAEGNHRKKP…ISPNKKAHPN (91 aa)). Position 2 is an N-acetylalanine (Ala-2). A Phosphoserine modification is found at Ser-83. A disordered region spans residues 84–104 (PNKKAHPNMEAGPPESGESTD). Catalysis depends on residues His-210 and Cys-258. Residues 271–289 (SPASLEVASSQSSENLEED) constitute a propeptide that is removed on maturation. Position 314 is a (Microbial infection) ADP-riboxanated arginine (Arg-314).

It belongs to the peptidase C14A family. Heterotetramer that consists of two anti-parallel arranged heterodimers, each one formed by a 20 kDa (Caspase-4 subunit p20) and a 10 kDa (Caspase-4 subunit p10) subunit. Upon direct LPS-binding, forms large homooligomers, resulting in its activation. These oligomers are often referred to as 'non-canonical inflammasomes'. In its precursor form, interacts with TMEM214; this interaction is required for association with the endoplasmic reticulum membrane. Interacts with CASP1. Interacts with NOD2. Interacts with SERPINB1; this interaction regulates CASP4 activity. In terms of assembly, heterotetramer that consists of two anti-parallel arranged heterodimers, each one formed by a 20 kDa (Caspase-4 subunit p20) and a 10 kDa (Caspase-4 subunit p10) subunit. As to quaternary structure, (Microbial infection) Interacts with NleF protein from pathogenic E.coli; this interaction leads to enzyme inhibition. (Microbial infection) Interacts with cathepsin CTSG; the interaction is promoted by the Td92 surface protein of the periodontal pathogen T.denticola and leads to CASP4 activation. Post-translationally, in response to activation signals, undergoes autoproteolytic cleavage and activation. In terms of processing, (Microbial infection) ADP-riboxanation by S.flexneri OspC3 blocks CASP4 autoprocessing, preventing CASP4 activation and ability to recognize and cleave GSDMD, thereby thwarting the inflammasome/pyroptosis-mediated defense. As to expression, widely expressed, including in keratinocytes and colonic and small intestinal epithelial cells (at protein level). Not detected in brain.

The protein localises to the cytoplasm. The protein resides in the cytosol. It is found in the endoplasmic reticulum membrane. It localises to the mitochondrion. Its subcellular location is the inflammasome. The protein localises to the secreted. It carries out the reaction Strict requirement for Asp at the P1 position. It has a preferred cleavage sequence of Tyr-Val-Ala-Asp-|- but also cleaves at Asp-Glu-Val-Asp-|-.. With respect to regulation, activated by homooligomerization induced by direct binding to cytosolic LPS, in a TLR4-independent manner. In addition to LPS, CASP4/CASP11 may also be activated by oxidized phospholipid 1-palmitoyl-2-arachidonoyl- sn-glycero-3-phosphorylcholine, an oxidized phospholipid (oxPAPC), in dendritic cells, promoting adaptive immunity. The role of oxPAPC is however unclear and another report suggests that oxPAPC competes with LPS-binding and inhibits the non-canonical inflammasome in macrophages. Inflammatory caspase that acts as the effector of the non-canonical inflammasome by mediating lipopolysaccharide (LPS)-induced pyroptosis. Also indirectly activates the NLRP3 and NLRP6 inflammasomes. Acts as a thiol protease that cleaves a tetrapeptide after an Asp residue at position P1: catalyzes cleavage of CGAS, GSDMD and IL18. Effector of the non-canonical inflammasome independently of NLRP3 inflammasome and CASP1: the non-canonical inflammasome promotes pyroptosis through GSDMD cleavage without involving secretion of cytokine IL1B. In the non-canonical inflammasome, CASP4 is activated by direct binding to the lipid A moiety of LPS without the need of an upstream sensor. LPS-binding promotes CASP4 activation and CASP4-mediated cleavage of GSDMD and IL18, followed by IL18 secretion through the GSDMD pore, pyroptosis of infected cells and their extrusion into the gut lumen. Also indirectly promotes secretion of mature cytokines (IL1A and HMGB1) downstream of GSDMD-mediated pyroptosis via activation of the NLRP3 and NLRP6 inflammasomes. Involved in NLRP3-dependent CASP1 activation and IL1B secretion in response to non-canonical activators, such as UVB radiation or cholera enterotoxin. Involved in NLRP6 inflammasome-dependent activation in response to lipoteichoic acid (LTA), a cell-wall component of Gram-positive bacteria, which leads to CASP1 activation and IL1B secretion. Involved in LPS-induced IL6 secretion; this activity may not require caspase enzymatic activity. The non-canonical inflammasome is required for innate immunity to cytosolic, but not vacuolar, bacteria. Plays a crucial role in the restriction of S.typhimurium replication in colonic epithelial cells during infection. Activation of the non-canonical inflammasome in brain endothelial cells can lead to excessive pyroptosis, leading to blood-brain barrier breakdown. Pyroptosis limits bacterial replication, while cytokine secretion promotes the recruitment and activation of immune cells and triggers mucosal inflammation. May also act as an activator of adaptive immunity in dendritic cells, following activation by oxidized phospholipid 1-palmitoyl-2-arachidonoyl- sn-glycero-3-phosphorylcholine, an oxidized phospholipid (oxPAPC). Involved in cell death induced by endoplasmic reticulum stress and by treatment with cytotoxic APP peptides found in Alzheimer's patient brains. Cleavage of GSDMD is not strictly dependent on the consensus cleavage site but depends on an exosite interface on CASP4 that recognizes and binds the Gasdermin-D, C-terminal (GSDMD-CT) part. Catalyzes cleavage and maturation of IL18; IL18 processing also depends of the exosite interface on CASP4. In contrast, it does not directly process IL1B. During non-canonical inflammasome activation, cuts CGAS and may play a role in the regulation of antiviral innate immune activation. Functionally, (Microbial infection) In response to the Td92 surface protein of the periodontal pathogen T.denticola, activated by cathepsin CTSG which leads to production and secretion of IL1A and pyroptosis of gingival fibroblasts. This Homo sapiens (Human) protein is Caspase-4.